The following is an 88-amino-acid chain: DNA-directed RNA polymerase subunit omega (88 aa).

This sequence belongs to the RNA polymerase subunit omega family. The RNAP catalytic core consists of 2 alpha, 1 beta, 1 beta' and 1 omega subunit. When a sigma factor is associated with the core the holoenzyme is formed, which can initiate transcription.

It catalyses the reaction RNA(n) + a ribonucleoside 5'-triphosphate = RNA(n+1) + diphosphate. Its function is as follows. Promotes RNA polymerase assembly. Latches the N- and C-terminal regions of the beta' subunit thereby facilitating its interaction with the beta and alpha subunits. This Clostridioides difficile (strain 630) (Peptoclostridium difficile) protein is DNA-directed RNA polymerase subunit omega.